The sequence spans 418 residues: Dihydrolipoyllysine-residue acetyltransferase component of pyruvate dehydrogenase complex (418 aa).

Positions 2-78 constitute a Lipoyl-binding domain; that stretch reads PIKLLMPALS…PVNSLIAVLI (77 aa). An N6-lipoyllysine modification is found at Lys43. Residues 133–170 form the Peripheral subunit-binding (PSBD) domain; it reads FASPLAKRLAKIQNVRIEEIKGSGPHGRIIKQDVLSHK. His388 is an active-site residue.

The protein belongs to the 2-oxoacid dehydrogenase family. As to quaternary structure, forms a 24-polypeptide structural core with octahedral symmetry. Requires (R)-lipoate as cofactor.

The catalysed reaction is N(6)-[(R)-dihydrolipoyl]-L-lysyl-[protein] + acetyl-CoA = N(6)-[(R)-S(8)-acetyldihydrolipoyl]-L-lysyl-[protein] + CoA. The pyruvate dehydrogenase complex catalyzes the overall conversion of pyruvate to acetyl-CoA and CO(2). It contains multiple copies of three enzymatic components: pyruvate dehydrogenase (E1), dihydrolipoamide acetyltransferase (E2) and lipoamide dehydrogenase (E3). In Rickettsia bellii (strain RML369-C), this protein is Dihydrolipoyllysine-residue acetyltransferase component of pyruvate dehydrogenase complex (pdhC).